The chain runs to 910 residues: NADH-quinone oxidoreductase subunit G (910 aa).

The 83-residue stretch at 1-83 (MAKIYVDGKA…GTIISINDDT (83 aa)) folds into the 2Fe-2S ferredoxin-type domain. Residues Cys-34, Cys-45, Cys-48, and Cys-67 each coordinate [2Fe-2S] cluster. One can recognise a 4Fe-4S His(Cys)3-ligated-type domain in the interval 83–122 (TSKKFRSNIVELLLTNHPHDCPVCEEGGNCHLQDMTVMTT). Residues His-99, Cys-103, Cys-106, Cys-112, Cys-151, Cys-154, Cys-157, Cys-201, Cys-228, Cys-231, Cys-235, and Cys-263 each coordinate [4Fe-4S] cluster. The region spanning 221-277 (MQYAPGICQNCSIGCNISIGERYGEIRRIENRYHESINHYLICDLGRFGYSHTNLKN) is the 4Fe-4S Mo/W bis-MGD-type domain.

The protein belongs to the complex I 75 kDa subunit family. Composed of 13 different subunits. Subunits NuoCD, E, F, and G constitute the peripheral sector of the complex. [2Fe-2S] cluster serves as cofactor. The cofactor is [4Fe-4S] cluster.

The catalysed reaction is a quinone + NADH + 5 H(+)(in) = a quinol + NAD(+) + 4 H(+)(out). Its function is as follows. NDH-1 shuttles electrons from NADH, via FMN and iron-sulfur (Fe-S) centers, to quinones in the respiratory chain. Couples the redox reaction to proton translocation (for every two electrons transferred, four hydrogen ions are translocated across the cytoplasmic membrane), and thus conserves the redox energy in a proton gradient. This Buchnera aphidicola subsp. Schizaphis graminum (strain Sg) protein is NADH-quinone oxidoreductase subunit G (nuoG).